The following is a 245-amino-acid chain: Outer membrane protein assembly factor BamD (245 aa).

A signal peptide spans 1-19 (MTRMKYLVAAATLSLFLAG). Residue Cys-20 is the site of N-palmitoyl cysteine attachment. Cys-20 carries S-diacylglycerol cysteine lipidation.

This sequence belongs to the BamD family. As to quaternary structure, part of the Bam complex, which is composed of the outer membrane protein BamA, and four lipoproteins BamB, BamC, BamD and BamE.

Its subcellular location is the cell outer membrane. Its function is as follows. Part of the outer membrane protein assembly complex, which is involved in assembly and insertion of beta-barrel proteins into the outer membrane. Constitutes, with BamA, the core component of the assembly machinery. The protein is Outer membrane protein assembly factor BamD of Escherichia coli O157:H7.